Reading from the N-terminus, the 392-residue chain is Outer membrane protein assembly factor BamB (392 aa).

The first 19 residues, 1 to 19 (MQLRKLLLPGLLSVTLLSG), serve as a signal peptide directing secretion. Residue cysteine 20 is the site of N-palmitoyl cysteine attachment. A lipid anchor (S-diacylglycerol cysteine) is attached at cysteine 20.

The protein belongs to the BamB family. Part of the Bam complex, which is composed of the outer membrane protein BamA, and four lipoproteins BamB, BamC, BamD and BamE. Monomer. Interacts directly with BamA. The Bam complex has the shape of a hat, with the BamA beta-barrel crown in the outer membrane and the periplasmic brim formed by the BamA POTRA domains and the 4 lipoproteins.

The protein resides in the cell outer membrane. Part of the outer membrane protein assembly complex (Bam), which is involved in assembly and insertion of beta-barrel proteins into the outer membrane. Nonessential member of the complex, which may orient the flexible periplasmic domain of BamA for interaction with other Bam components, chaperones and nascent outer membrane proteins. Efficient substrate folding and insertion into the outer membrane requires all 5 subunits. A lateral gate may open between the first and last strands of the BamA beta-barrel that allows substrate to insert into the outer membrane; comparison of the structures of complete and nearly complete Bam complexes show there is considerable movement of all 5 proteins. The sequence is that of Outer membrane protein assembly factor BamB from Escherichia coli (strain K12).